Reading from the N-terminus, the 168-residue chain is S-ribosylhomocysteine lyase (168 aa).

Fe cation-binding residues include H54, H58, and C128.

Belongs to the LuxS family. Homodimer. Requires Fe cation as cofactor.

It catalyses the reaction S-(5-deoxy-D-ribos-5-yl)-L-homocysteine = (S)-4,5-dihydroxypentane-2,3-dione + L-homocysteine. Functionally, involved in the synthesis of autoinducer 2 (AI-2) which is secreted by bacteria and is used to communicate both the cell density and the metabolic potential of the environment. The regulation of gene expression in response to changes in cell density is called quorum sensing. Catalyzes the transformation of S-ribosylhomocysteine (RHC) to homocysteine (HC) and 4,5-dihydroxy-2,3-pentadione (DPD). This Neisseria meningitidis serogroup A / serotype 4A (strain DSM 15465 / Z2491) protein is S-ribosylhomocysteine lyase.